We begin with the raw amino-acid sequence, 150 residues long: uncharacterized protein (150 aa).

The next 3 membrane-spanning stretches (helical) occupy residues 48–68 (LFLL…CFLF), 89–109 (VFIF…YLLP), and 123–143 (REVF…IFTL).

It to M.pneumoniae MPN_085 central region.

Its subcellular location is the cell membrane. This is an uncharacterized protein from Mycoplasma pneumoniae (strain ATCC 29342 / M129 / Subtype 1) (Mycoplasmoides pneumoniae).